The chain runs to 500 residues: Nuclear distribution protein PAC1 (500 aa).

WD repeat units lie at residues 125–164 (HNGH…EPQQ), 169–219 (AHTR…NLKA), 225–265 (GHEN…IVLS), 268–310 (GHSN…LMIG), 338–378 (QNEL…IRSD), 397–436 (EHKS…ESNL), and 459–500 (IKDQ…EYIL).

The protein belongs to the WD repeat LIS1/nudF family. Self-associates. Interacts with NDL1 and dynein.

The protein resides in the cytoplasm. It localises to the cytoskeleton. It is found in the spindle pole. Its function is as follows. Positively regulates the activity of the minus-end directed microtubule motor protein dynein. Plays a central role in positioning the mitotic spindle at the bud neck during cell division. Targets cytoplasmic dynein to microtubule plus ends, thereby promoting dynein-mediated microtubule sliding along the bud cortex and consequently the movement of the mitotic spindle to the bud neck. This Komagataella phaffii (strain GS115 / ATCC 20864) (Yeast) protein is Nuclear distribution protein PAC1.